The primary structure comprises 87 residues: Phospholemman (87 aa).

Positions 1-20 (MASLSHILVLWVGILTVVNA) are cleaved as a signal peptide. Residues 21–35 (EAPQEHDPFTYDYQS) lie on the Extracellular side of the membrane. Residues 36-56 (LRIGGLIIAGILFILGILIVL) form a helical membrane-spanning segment. Residues 57 to 87 (SRRCRCKFNQQQSLGKMRSPHLAAQFSSESC) are Cytoplasmic-facing. Cys-60 carries the S-palmitoyl cysteine lipid modification. At Cys-62 the chain carries S-glutathionyl cysteine; alternate. A lipid anchor (S-palmitoyl cysteine; alternate) is attached at Cys-62. The residue at position 75 (Ser-75) is a Phosphoserine; by PKA and PKC. Ser-83 bears the Phosphoserine; by PKA mark.

This sequence belongs to the FXYD family. Homotetramer. Monomer. Regulatory subunit of the sodium/potassium-transporting ATPase (NKA) which is composed of a catalytic alpha subunit, a non-catalytic beta subunit and an additional regulatory subunit. The monomeric form associates with NKA while the oligomeric form does not. Interacts with the catalytic alpha-1 subunit ATP1A1. Also interacts with the catalytic alpha-2 and alpha-3 subunits ATP1A2 and ATP1A3. Very little interaction with ATP1A1, ATP1A2 or ATP1A3 when phosphorylated at Ser-83. Interacts with the non-catalytic beta-1 subunit ATP1B1. Oxidative stress decreases interaction with ATP1A1 but increases interaction with ATP1B1. In terms of processing, major plasma membrane substrate for cAMP-dependent protein kinase (PKA) and protein kinase C (PKC) in several different tissues. Phosphorylated in response to insulin and adrenergic stimulation. Phosphorylation at Ser-83 stimulates sodium/potassium-transporting ATPase activity while the unphosphorylated form inhibits sodium/potassium-transporting ATPase activity. Phosphorylation increases tetramerization, decreases binding to ATP1A1 and reduces inhibition of ATP1A1 activity. Phosphorylation at Ser-75 leads to greatly reduced interaction with ATP1A1, ATP1A2 and ATP1A3. May be phosphorylated by DMPK. Post-translationally, palmitoylation increases half-life and stability and is enhanced upon phosphorylation at Ser-83 by PKA.

The protein localises to the cell membrane. It is found in the sarcolemma. It localises to the apical cell membrane. The protein resides in the membrane. Its subcellular location is the caveola. The protein localises to the T-tubule. Its function is as follows. Associates with and regulates the activity of the sodium/potassium-transporting ATPase (NKA) which transports Na(+) out of the cell and K(+) into the cell. Inhibits NKA activity in its unphosphorylated state and stimulates activity when phosphorylated. Reduces glutathionylation of the NKA beta-1 subunit ATP1B1, thus reversing glutathionylation-mediated inhibition of ATP1B1. Contributes to female sexual development by maintaining the excitability of neurons which secrete gonadotropin-releasing hormone. This chain is Phospholemman, found in Sus scrofa (Pig).